Reading from the N-terminus, the 346-residue chain is Calcium uniporter protein, mitochondrial (346 aa).

At 1–195 (MTKGKLLTTP…ECDKAAHRGA (195 aa)) the chain is on the mitochondrial matrix side. The segment at 55–120 (ELPPPDPQDS…GEGKDEGEFV (66 aa)) is disordered. Composition is skewed to basic and acidic residues over residues 76–91 (MEAK…KADT) and 109–119 (REGEGKDEGEF). The helical transmembrane segment at 196 to 216 (QRIALAGCGGLIGYWYIVYRL) threads the bilayer. Over 217–226 (TFETDLGWDV) the chain is Mitochondrial intermembrane. Positions 224-232 (WDVMEPVTY) match the Selectivity filter motif. The chain crosses the membrane as a helical span at residues 227-248 (MEPVTYLVGLSTLIGGYMWFLW). Position 228 (Glu228) interacts with Ca(2+). At 249-346 (HNREVSYRSA…KEGEEDDEDD (98 aa)) the chain is on the mitochondrial matrix side. Residues 306–346 (WNETQDEGGDEKVTKALRDERKNNNGTKNKSKEGEEDDEDD) are disordered. A compositionally biased stretch (basic and acidic residues) spans 315–328 (DEKVTKALRDERKN).

Belongs to the MCU (TC 1.A.77) family. Homotetramer, assembles in a dimer or dimers configuration with two interfaces.

Its subcellular location is the mitochondrion inner membrane. It catalyses the reaction Ca(2+)(in) = Ca(2+)(out). In terms of biological role, highly selective calcium channel localized to the inner mitochondrial membrane, which mediates calcium uptake into the mitochondrial matrix. Mitochondrial calcium homeostasis plays key roles in cellular physiology and regulates ATP production, cytoplasmic calcium signals and activation of cell death pathways. Sufficient to operate as a pore-forming channel without the need of calcium-sensor or auxiliary subunit. The sequence is that of Calcium uniporter protein, mitochondrial from Cyphellophora europaea (strain CBS 101466) (Phialophora europaea).